A 440-amino-acid polypeptide reads, in one-letter code: Protein disulfide-isomerase 5-2 (440 aa).

Positions 1-23 (MRSLKLLLCWISFLTLSISISAS) are cleaved as a signal peptide. A Thioredoxin domain is found at 24–139 (SDDQFTLDGT…LVRYLKKFVA (116 aa)). Active-site nucleophile residues include cysteine 61 and cysteine 64. An intrachain disulfide couples cysteine 61 to cysteine 64. Position 160 is a phosphothreonine (threonine 160). An N-linked (GlcNAc...) asparagine glycan is attached at asparagine 171. A helical membrane pass occupies residues 376–396 (SMIGIRSVYILVFLVAVIMML). Positions 406 to 440 (TGVRTATAVRERVDQATTVPEDESSEHKPSDKKED) are disordered. Over residues 430–440 (SEHKPSDKKED) the composition is skewed to basic and acidic residues.

The protein belongs to the protein disulfide isomerase family. As to expression, widely expressed.

The protein resides in the membrane. Acts as a protein-folding catalyst that interacts with nascent polypeptides to catalyze the formation, isomerization, and reduction or oxidation of disulfide bonds. This is Protein disulfide-isomerase 5-2 (PDIL5-2) from Arabidopsis thaliana (Mouse-ear cress).